The chain runs to 874 residues: Oxysterol-binding protein-related protein 5 (874 aa).

The segment at 1–71 (MKEEAFLRRR…PQTPGSATKV (71 aa)) is disordered. Phosphoserine is present on serine 12. Positions 93–123 (VSKKDALKAQKENYRQEKKRATKQLFSALTD) form a coiled coil. Residues 126–243 (VVIMADSLKI…WLDALELALR (118 aa)) enclose the PH domain. Disordered stretches follow at residues 255–277 (QGRDGEQGSSPDASPSSLYGLPT) and 299–338 (FSDKSERENAEDSDAETQDHSRKTNESGSDLLDSPGGPWR). Polar residues predominate over residues 261–277 (QGSSPDASPSSLYGLPT). A compositionally biased stretch (basic and acidic residues) spans 299 to 308 (FSDKSERENA). A 1,2-diacyl-sn-glycero-3-phospho-(1D-myo-inositol 4-phosphate) contacts are provided by residues 383 to 388 (LSRVVL), 445 to 448 (KPYN), and 477 to 478 (HH). A 1,2-diacyl-sn-glycero-3-phospho-L-serine-binding positions include 383 to 388 (LSRVVL) and asparagine 448. Serine 503 provides a ligand contact to a 1,2-diacyl-sn-glycero-3-phospho-L-serine. Basic and acidic residues predominate over residues 660–684 (GDQHKATQEKSVLEEAQRQRAREHQ). 2 disordered regions span residues 660 to 685 (GDQHKATQEKSVLEEAQRQRAREHQQ) and 739 to 798 (GQTT…GGES). 3 residues coordinate a 1,2-diacyl-sn-glycero-3-phospho-(1D-myo-inositol 4-phosphate): lysine 669, glutamate 673, and arginine 677. Phosphoserine occurs at positions 746 and 749. Positions 754–764 (PSSDRRLRKAS) are enriched in basic and acidic residues. Residues 765-782 (DQPSGHSQVTESSGSTPE) show a composition bias toward polar residues. The helical transmembrane segment at 855-873 (SWFLLCIFLTCQLFINYIL) threads the bilayer.

This sequence belongs to the OSBP family.

It localises to the endoplasmic reticulum membrane. Functionally, lipid transporter involved in lipid countertransport between the endoplasmic reticulum and the plasma membrane: specifically exchanges phosphatidylserine with phosphatidylinositol 4-phosphate (PI4P), delivering phosphatidylserine to the plasma membrane in exchange for PI4P, which is degraded by the SAC1/SACM1L phosphatase in the endoplasmic reticulum. Binds phosphatidylserine and PI4P in a mutually exclusive manner. May cooperate with NPC1 to mediate the exit of cholesterol from endosomes/lysosomes. Binds 25-hydroxycholesterol and cholesterol. The chain is Oxysterol-binding protein-related protein 5 (Osbpl5) from Mus musculus (Mouse).